A 90-amino-acid polypeptide reads, in one-letter code: Small ribosomal subunit protein bS20 (90 aa).

The segment covering 1–10 (MANHKSTQKS) has biased composition (polar residues). The interval 1 to 25 (MANHKSTQKSIRQDQKRNLINKSRK) is disordered.

The protein belongs to the bacterial ribosomal protein bS20 family.

Binds directly to 16S ribosomal RNA. The polypeptide is Small ribosomal subunit protein bS20 (Orientia tsutsugamushi (strain Ikeda) (Rickettsia tsutsugamushi)).